Reading from the N-terminus, the 239-residue chain is Purine nucleoside phosphorylase DeoD-type (239 aa).

Residue His-5 participates in a purine D-ribonucleoside binding. Phosphate contacts are provided by residues Gly-21, Arg-25, Arg-44, and 88 to 91; that span reads RVGS. A purine D-ribonucleoside is bound by residues 180 to 182 and 204 to 205; these read EME and SD. The active-site Proton donor is the Asp-205.

This sequence belongs to the PNP/UDP phosphorylase family. Homohexamer; trimer of homodimers.

The catalysed reaction is a purine D-ribonucleoside + phosphate = a purine nucleobase + alpha-D-ribose 1-phosphate. It catalyses the reaction a purine 2'-deoxy-D-ribonucleoside + phosphate = a purine nucleobase + 2-deoxy-alpha-D-ribose 1-phosphate. Functionally, catalyzes the reversible phosphorolytic breakdown of the N-glycosidic bond in the beta-(deoxy)ribonucleoside molecules, with the formation of the corresponding free purine bases and pentose-1-phosphate. The polypeptide is Purine nucleoside phosphorylase DeoD-type (Salmonella arizonae (strain ATCC BAA-731 / CDC346-86 / RSK2980)).